Consider the following 311-residue polypeptide: Porphobilinogen deaminase (311 aa).

Cys242 carries the post-translational modification S-(dipyrrolylmethanemethyl)cysteine.

It belongs to the HMBS family. Monomer. The cofactor is dipyrromethane.

The catalysed reaction is 4 porphobilinogen + H2O = hydroxymethylbilane + 4 NH4(+). The protein operates within porphyrin-containing compound metabolism; protoporphyrin-IX biosynthesis; coproporphyrinogen-III from 5-aminolevulinate: step 2/4. Tetrapolymerization of the monopyrrole PBG into the hydroxymethylbilane pre-uroporphyrinogen in several discrete steps. The chain is Porphobilinogen deaminase (hemC) from Neisseria meningitidis serogroup B (strain ATCC BAA-335 / MC58).